The sequence spans 296 residues: Homoserine kinase (296 aa).

Residue Pro-92–Ala-102 participates in ATP binding.

It belongs to the GHMP kinase family. Homoserine kinase subfamily.

It is found in the cytoplasm. It catalyses the reaction L-homoserine + ATP = O-phospho-L-homoserine + ADP + H(+). It functions in the pathway amino-acid biosynthesis; L-threonine biosynthesis; L-threonine from L-aspartate: step 4/5. In terms of biological role, catalyzes the ATP-dependent phosphorylation of L-homoserine to L-homoserine phosphate. In Cutibacterium acnes (strain DSM 16379 / KPA171202) (Propionibacterium acnes), this protein is Homoserine kinase.